Consider the following 341-residue polypeptide: Serine/threonine-protein kinase pdik1l (341 aa).

Positions 8 to 332 (YELIQEVGRG…FELELRLVRI (325 aa)) constitute a Protein kinase domain. 14 to 22 (VGRGSYGVV) serves as a coordination point for ATP. Catalysis depends on D164, which acts as the Proton acceptor.

The protein belongs to the protein kinase superfamily. Ser/Thr protein kinase family.

Its subcellular location is the nucleus. It carries out the reaction L-seryl-[protein] + ATP = O-phospho-L-seryl-[protein] + ADP + H(+). The enzyme catalyses L-threonyl-[protein] + ATP = O-phospho-L-threonyl-[protein] + ADP + H(+). This chain is Serine/threonine-protein kinase pdik1l (pdik1l), found in Danio rerio (Zebrafish).